An 816-amino-acid polypeptide reads, in one-letter code: uncharacterized protein (816 aa).

An NADP(+)-binding site is contributed by 503-534; sequence DTWTVITGGTDGIGKAYIEELCKTRGLKKFYL. Residue Ser641 participates in substrate binding. Tyr661 acts as the Proton acceptor in catalysis. Transmembrane regions (helical) follow at residues 743-763 and 777-797; these read FGFS…SIVL and VFII…FLLN.

This sequence belongs to the short-chain dehydrogenases/reductases (SDR) family.

It localises to the membrane. This is an uncharacterized protein from Caenorhabditis elegans.